A 280-amino-acid chain; its full sequence is Protoheme IX farnesyltransferase 2 (280 aa).

The next 9 membrane-spanning stretches (helical) occupy residues 12-32 (VIWLLILASVAGYIYGGGGVD), 35-55 (LFSLLAVAFLSTGGSAAFNHY), 76-96 (LITPNAALAYSLALSATGISL), 98-118 (FLLLGLLPGLFVLLGWLFYAV), 129-149 (WLNIFGGGFAGNAVFLGGYAL), 158-178 (AVLISFAIYLWTPSHIWALAF), 199-221 (ERAVAVISAINAAAAAYILWLYL), 226-248 (GAGGAIVALGVAATIATSIYAAV), and 255-275 (MWKMYKASSPMLTLFLIALMI).

This sequence belongs to the UbiA prenyltransferase family. Protoheme IX farnesyltransferase subfamily.

It is found in the cell membrane. It catalyses the reaction heme b + (2E,6E)-farnesyl diphosphate + H2O = Fe(II)-heme o + diphosphate. It participates in porphyrin-containing compound metabolism; heme O biosynthesis; heme O from protoheme: step 1/1. Functionally, converts heme B (protoheme IX) to heme O by substitution of the vinyl group on carbon 2 of heme B porphyrin ring with a hydroxyethyl farnesyl side group. The protein is Protoheme IX farnesyltransferase 2 of Pyrobaculum aerophilum (strain ATCC 51768 / DSM 7523 / JCM 9630 / CIP 104966 / NBRC 100827 / IM2).